Reading from the N-terminus, the 422-residue chain is UDP-N-acetylglucosamine 1-carboxyvinyltransferase (422 aa).

A phosphoenolpyruvate-binding site is contributed by K22 to N23. R93 contacts UDP-N-acetyl-alpha-D-glucosamine. C117 (proton donor) is an active-site residue. C117 bears the 2-(S-cysteinyl)pyruvic acid O-phosphothioketal mark. Residues R122–L126, D308, and I330 each bind UDP-N-acetyl-alpha-D-glucosamine.

The protein belongs to the EPSP synthase family. MurA subfamily.

It localises to the cytoplasm. The enzyme catalyses phosphoenolpyruvate + UDP-N-acetyl-alpha-D-glucosamine = UDP-N-acetyl-3-O-(1-carboxyvinyl)-alpha-D-glucosamine + phosphate. The protein operates within cell wall biogenesis; peptidoglycan biosynthesis. Functionally, cell wall formation. Adds enolpyruvyl to UDP-N-acetylglucosamine. This chain is UDP-N-acetylglucosamine 1-carboxyvinyltransferase, found in Legionella pneumophila (strain Paris).